Here is a 109-residue protein sequence, read N- to C-terminus: Sperm-specific class P protein 10 (109 aa).

Residues 2–109 (SLTADPPACT…TVTIPMSATA (108 aa)) form the MSP domain.

Expressed at higher level in testis.

This is Sperm-specific class P protein 10 (ssp-10) from Caenorhabditis elegans.